The sequence spans 2325 residues: Protein Ycf2 (2325 aa).

Disordered regions lie at residues 168–189 (SSQL…GTED), 221–251 (TEIE…EMNN), and 947–1006 (KRKK…KRKE). Over residues 230–240 (KGLSGSSSKSR) the composition is skewed to low complexity. Composition is skewed to basic and acidic residues over residues 241 to 250 (LFTEGEKEMN) and 955 to 1004 (KRKE…PEKR). 1436-1443 (GSIGSGRS) is an ATP binding site. Disordered stretches follow at residues 1510–1529 (YEDR…DYEP), 1855–1996 (LVGS…LLRP), and 2063–2179 (PAEE…DGFS). Acidic residues predominate over residues 1861-1976 (TEEEVEGTEE…VEGTEDEEGE (116 aa)). Over residues 1977 to 1989 (GTEKDSSQFDNDR) the composition is skewed to basic and acidic residues. Acidic residues-rich tracts occupy residues 2063–2080 (PAEE…EALE) and 2087–2162 (GEEE…ENDS).

It belongs to the Ycf2 family.

The protein resides in the plastid. Its subcellular location is the chloroplast stroma. Its function is as follows. Probable ATPase of unknown function. Its presence in a non-photosynthetic plant (Epifagus virginiana) and experiments in tobacco indicate that it has an essential function which is probably not related to photosynthesis. The polypeptide is Protein Ycf2 (Oenothera biennis (German evening primrose)).